Here is a 583-residue protein sequence, read N- to C-terminus: 2-succinyl-5-enolpyruvyl-6-hydroxy-3-cyclohexene-1-carboxylate synthase (583 aa).

The protein belongs to the TPP enzyme family. MenD subfamily. Homodimer. Mg(2+) serves as cofactor. Requires Mn(2+) as cofactor. Thiamine diphosphate is required as a cofactor.

The enzyme catalyses isochorismate + 2-oxoglutarate + H(+) = 5-enolpyruvoyl-6-hydroxy-2-succinyl-cyclohex-3-ene-1-carboxylate + CO2. It functions in the pathway quinol/quinone metabolism; 1,4-dihydroxy-2-naphthoate biosynthesis; 1,4-dihydroxy-2-naphthoate from chorismate: step 2/7. The protein operates within cofactor biosynthesis; phylloquinone biosynthesis. Functionally, catalyzes the thiamine diphosphate-dependent decarboxylation of 2-oxoglutarate and the subsequent addition of the resulting succinic semialdehyde-thiamine pyrophosphate anion to isochorismate to yield 2-succinyl-5-enolpyruvyl-6-hydroxy-3-cyclohexene-1-carboxylate (SEPHCHC). The sequence is that of 2-succinyl-5-enolpyruvyl-6-hydroxy-3-cyclohexene-1-carboxylate synthase from Nostoc sp. (strain PCC 7120 / SAG 25.82 / UTEX 2576).